A 753-amino-acid chain; its full sequence is Bile salt-activated lipase (753 aa).

An N-terminal signal peptide occupies residues 1–20 (MGRLQLVVLGLTCCWAVASA). Positions 21 to 121 (AKLGAVYTEG…KQVSRDLPVM (101 aa)) are heparin-binding. C84 and C100 are joined by a disulfide. Residue N207 is glycosylated (N-linked (GlcNAc...) (complex) asparagine). S214 functions as the Acyl-ester intermediate in the catalytic mechanism. C266 and C277 are joined by a disulfide. Catalysis depends on charge relay system residues D340 and H455. A disordered region spans residues 555-753 (QEATPVPPTG…EAQMPAVIRF (199 aa)). O-linked (GalNAc...) threonine glycans are attached at residues T558, T569, and T579. 17 consecutive repeat copies span residues 559-569 (PVPPTGDSEAT), 570-580 (PVPPTGDSETA), 581-591 (PVPPTGDSGAP), 592-602 (PVPPTGDSGAP), 603-613 (PVPPTGDSGAP), 614-624 (PVPPTGDSGAP), 625-635 (PVPPTGDSGAP), 636-646 (PVPPTGDSGAP), 647-657 (PVPPTGDSGAP), 658-668 (PVPPTGDSGAP), 669-679 (PVPPTGDAGPP), 680-690 (PVPPTGDSGAP), 691-701 (PVPPTGDSGAP), 702-712 (PVTPTGDSETA), 713-723 (PVPPTGDSGAP), 724-734 (PVPPTGDSEAA), and 735-745 (PVPPTDDSKEA). The tract at residues 559 to 745 (PVPPTGDSEA…VPPTDDSKEA (187 aa)) is 17 X 11 AA tandem repeats, glycodomain, O-linked (mucin type). T607, T618, T629, T640, T651, T662, and T673 each carry an O-linked (GalNAc...) threonine glycan. Residues 668–683 (PPVPPTGDAGPPPVPP) are compositionally biased toward pro residues.

It belongs to the type-B carboxylesterase/lipase family. In terms of assembly, interacts with CLC. N- and O-glycosylated. Mammary gland and pancreas. Detected in pancreatic and duodenal juice (at protein level). Expressed by eosinophils.

Its subcellular location is the secreted. It carries out the reaction a triacylglycerol + H2O = a diacylglycerol + a fatty acid + H(+). It catalyses the reaction 1,2,3-tri-(9Z-octadecenoyl)-glycerol + H2O = di-(9Z)-octadecenoylglycerol + (9Z)-octadecenoate + H(+). The enzyme catalyses 1,2,3-trioctanoylglycerol + H2O = dioctanoylglycerol + octanoate + H(+). The catalysed reaction is a sterol ester + H2O = a sterol + a fatty acid + H(+). It carries out the reaction cholesteryl (9Z-octadecenoate) + H2O = cholesterol + (9Z)-octadecenoate + H(+). It catalyses the reaction an acetyl ester + H2O = an aliphatic alcohol + acetate + H(+). The enzyme catalyses a butanoate ester + H2O = an aliphatic alcohol + butanoate + H(+). The catalysed reaction is 9-hexadecanoyloxy-octadecanoate + H2O = 9-hydroxy-octadecanoate + hexadecanoate + H(+). It carries out the reaction 9-(9Z-octadecenoyloxy)-octadecanoate + H2O = 9-hydroxy-octadecanoate + (9Z)-octadecenoate + H(+). It catalyses the reaction 1-hexadecanoyl-sn-glycero-3-phosphocholine + H2O = sn-glycerol 3-phosphocholine + hexadecanoate + H(+). The enzyme catalyses 12-hexadecanoyloxy-octadecanoate + H2O = 12-hydroxyoctadecanoate + hexadecanoate + H(+). The catalysed reaction is 12-(9Z-octadecenoyloxy)-octadecanoate + H2O = 12-hydroxyoctadecanoate + (9Z)-octadecenoate + H(+). It carries out the reaction 13-(9Z-octadecenoyloxy)-octadecanoate + H2O = 13-hydroxy-octadecanoate + (9Z)-octadecenoate + H(+). It catalyses the reaction 9-(9Z-hexadecenoyloxy)-octadecanoate + H2O = (9Z)-hexadecenoate + 9-hydroxy-octadecanoate + H(+). The enzyme catalyses 12-(9Z-hexadecenoyloxy)-octadecanoate + H2O = 12-hydroxyoctadecanoate + (9Z)-hexadecenoate + H(+). The catalysed reaction is 13-(9Z-hexadecenoyloxy)-octadecanoate + H2O = 13-hydroxy-octadecanoate + (9Z)-hexadecenoate + H(+). It carries out the reaction 12-octadecanoyloxy-octadecanoate + H2O = 12-hydroxyoctadecanoate + octadecanoate + H(+). It catalyses the reaction 13-octadecanoyloxy-octadecanoate + H2O = 13-hydroxy-octadecanoate + octadecanoate + H(+). The enzyme catalyses 5-(9Z-hexadecenoyloxy)-octadecanoate + H2O = 5-hydroxy-octadecanoate + (9Z)-hexadecenoate + H(+). The catalysed reaction is 9-octadecanoyloxy-octadecanoate + H2O = 9-hydroxy-octadecanoate + octadecanoate + H(+). Its activity is regulated as follows. Activated by bile salts such as sodium taurocholate. Functionally, catalyzes the hydrolysis of a wide range of substrates including cholesteryl esters, phospholipids, lysophospholipids, di- and tri-acylglycerols, and fatty acid esters of hydroxy fatty acids (FAHFAs). Preferentially hydrolyzes FAHFAs with the ester bond further away from the carboxylate. Unsaturated FAHFAs are hydrolyzed more quickly than saturated FAHFAs. Has an essential role in the complete digestion of dietary lipids and their intestinal absorption, along with the absorption of fat-soluble vitamins. In Homo sapiens (Human), this protein is Bile salt-activated lipase (CEL).